The primary structure comprises 278 residues: Phosphatidylglycerol--prolipoprotein diacylglyceryl transferase (278 aa).

The next 3 membrane-spanning stretches (helical) occupy residues 13 to 33 (LFGI…ALAV), 50 to 70 (VFDF…LYYV), and 89 to 109 (NGGL…FFFT). Arg-135 is a binding site for a 1,2-diacyl-sn-glycero-3-phospho-(1'-sn-glycerol). The next 3 membrane-spanning stretches (helical) occupy residues 175–195 (QPTF…LVLL), 205–225 (GEVF…IEGL), and 236–256 (IRVS…IVIV).

It belongs to the Lgt family.

It is found in the cell membrane. It carries out the reaction L-cysteinyl-[prolipoprotein] + a 1,2-diacyl-sn-glycero-3-phospho-(1'-sn-glycerol) = an S-1,2-diacyl-sn-glyceryl-L-cysteinyl-[prolipoprotein] + sn-glycerol 1-phosphate + H(+). It functions in the pathway protein modification; lipoprotein biosynthesis (diacylglyceryl transfer). In terms of biological role, catalyzes the transfer of the diacylglyceryl group from phosphatidylglycerol to the sulfhydryl group of the N-terminal cysteine of a prolipoprotein, the first step in the formation of mature lipoproteins. The polypeptide is Phosphatidylglycerol--prolipoprotein diacylglyceryl transferase (Enterococcus faecalis (strain ATCC 700802 / V583)).